A 481-amino-acid chain; its full sequence is Glutamyl-tRNA(Gln) amidotransferase subunit A (481 aa).

Active-site charge relay system residues include Lys-74 and Ser-149. The active-site Acyl-ester intermediate is Ser-173.

Belongs to the amidase family. GatA subfamily. As to quaternary structure, heterotrimer of A, B and C subunits.

It catalyses the reaction L-glutamyl-tRNA(Gln) + L-glutamine + ATP + H2O = L-glutaminyl-tRNA(Gln) + L-glutamate + ADP + phosphate + H(+). Its function is as follows. Allows the formation of correctly charged Gln-tRNA(Gln) through the transamidation of misacylated Glu-tRNA(Gln) in organisms which lack glutaminyl-tRNA synthetase. The reaction takes place in the presence of glutamine and ATP through an activated gamma-phospho-Glu-tRNA(Gln). This chain is Glutamyl-tRNA(Gln) amidotransferase subunit A, found in Francisella tularensis subsp. tularensis (strain FSC 198).